The following is a 1238-amino-acid chain: Virulence sensor protein BvgS (1238 aa).

Residues 1–32 (MPAPHRLYPRSLICLAQALLVWALLAWAPAQA) form the signal peptide. Residues 33–307 (SQELTLVGKA…REQQWMANHP (275 aa)) are Cytoplasmic-facing. The helical transmembrane segment at 308–331 (VVKVAVLNLFAPFTLFRTDEQFGG) threads the bilayer. Residues 332–541 (ISAAVLQLLQ…PRTWYAYRNE (210 aa)) lie on the Periplasmic side of the membrane. Residues 542–563 (IYLLIGLGLLSALLFLSWIVYL) form a helical membrane-spanning segment. The Cytoplasmic portion of the chain corresponds to 564 to 1238 (RRQIRQRKRA…LEQRPHQGQP (675 aa)). The PAS domain maps to 580-651 (QLEFMRVLID…MHEFLLTRMA (72 aa)). The PAC domain maps to 652-708 (AEREPRFEDRDVTLHGRTRHVYQWTVPYGDSLGELKGIIGGWIDITERAELLRELHD). Residues 726 to 948 (TMSHEIRTPM…TVSVDLRLTM (223 aa)) enclose the Histidine kinase domain. Histidine 729 bears the Phosphohistidine; by autocatalysis mark. A Response regulatory domain is found at 974-1095 (RVLVVDDHKP…ALRQRLNEAA (122 aa)). Aspartate 1023 is modified (4-aspartylphosphate). The region spanning 1133 to 1228 (DEALIRQLLE…AALETQLRAW (96 aa)) is the HPt domain. Position 1172 is a phosphohistidine (histidine 1172).

Post-translationally, activation requires a sequential transfer of a phosphate group from a His in the primary transmitter domain, to an Asp in the receiver domain and to a His in the secondary transmitter domain.

The protein resides in the cell inner membrane. It catalyses the reaction ATP + protein L-histidine = ADP + protein N-phospho-L-histidine.. In terms of biological role, member of the two-component regulatory system BvgS/BvgA. Phosphorylates BvgA via a four-step phosphorelay in response to environmental signals. The sequence is that of Virulence sensor protein BvgS (bvgS) from Bordetella parapertussis (strain 12822 / ATCC BAA-587 / NCTC 13253).